We begin with the raw amino-acid sequence, 429 residues long: Adenylosuccinate synthetase (429 aa).

Residues 12 to 18 (GDEGKGK) and 40 to 42 (GHT) contribute to the GTP site. The active-site Proton acceptor is aspartate 13. 2 residues coordinate Mg(2+): aspartate 13 and glycine 40. Residues 13–16 (DEGK), 38–41 (NAGH), threonine 128, arginine 142, glutamine 223, threonine 238, and arginine 302 contribute to the IMP site. Catalysis depends on histidine 41, which acts as the Proton donor. 298-304 (VNTGRPR) is a binding site for substrate. GTP-binding positions include arginine 304, 330 to 332 (KLD), and 412 to 414 (GVG).

Belongs to the adenylosuccinate synthetase family. In terms of assembly, homodimer. Mg(2+) serves as cofactor.

Its subcellular location is the cytoplasm. The catalysed reaction is IMP + L-aspartate + GTP = N(6)-(1,2-dicarboxyethyl)-AMP + GDP + phosphate + 2 H(+). The protein operates within purine metabolism; AMP biosynthesis via de novo pathway; AMP from IMP: step 1/2. Plays an important role in the de novo pathway of purine nucleotide biosynthesis. Catalyzes the first committed step in the biosynthesis of AMP from IMP. The sequence is that of Adenylosuccinate synthetase from Paenarthrobacter aurescens (strain TC1).